Consider the following 429-residue polypeptide: Glutamate-1-semialdehyde 2,1-aminomutase 2 (429 aa).

The residue at position 268 (K268) is an N6-(pyridoxal phosphate)lysine.

It belongs to the class-III pyridoxal-phosphate-dependent aminotransferase family. HemL subfamily. In terms of assembly, homodimer. Requires pyridoxal 5'-phosphate as cofactor.

It localises to the cytoplasm. It carries out the reaction (S)-4-amino-5-oxopentanoate = 5-aminolevulinate. The protein operates within porphyrin-containing compound metabolism; protoporphyrin-IX biosynthesis; 5-aminolevulinate from L-glutamyl-tRNA(Glu): step 2/2. This chain is Glutamate-1-semialdehyde 2,1-aminomutase 2, found in Geobacillus thermodenitrificans (strain NG80-2).